The chain runs to 755 residues: Ligand-dependent nuclear receptor-interacting factor 1 (755 aa).

K270 participates in a covalent cross-link: Glycyl lysine isopeptide (Lys-Gly) (interchain with G-Cter in SUMO2). Phosphoserine occurs at positions 391, 419, and 425. K436 is covalently cross-linked (Glycyl lysine isopeptide (Lys-Gly) (interchain with G-Cter in SUMO2)). Positions L565–L569 match the PxVxL motif motif. A Phosphoserine modification is found at S584. K590 participates in a covalent cross-link: Glycyl lysine isopeptide (Lys-Gly) (interchain with G-Cter in SUMO2). 2 short sequence motifs (nuclear localization signal) span residues K612–K615 and K625–K628. The tract at residues I665–S698 is disordered. The segment covering T671–K690 has biased composition (basic and acidic residues). A coiled-coil region spans residues T678–E711. K687 is covalently cross-linked (Glycyl lysine isopeptide (Lys-Gly) (interchain with G-Cter in SUMO2)). T717 is modified (phosphothreonine).

This sequence belongs to the LRIF1 family. In terms of assembly, interacts with RARA. Interacts with SMCHD1; leading to recruitment to inactivated chromosome X in females. Interacts (via PxVxL motif) with HP1 (CBX1/HP1-beta, CBX3/HP1-gamma and CBX5/HP1-alpha).

It is found in the chromosome. It localises to the nucleus matrix. Functionally, together with SMCHD1, involved in chromosome X inactivation in females by promoting the compaction of heterochromatin. Also able to repress the ligand-induced transcriptional activity of retinoic acid receptor alpha (RARA), possibly through direct recruitment of histone deacetylases. The sequence is that of Ligand-dependent nuclear receptor-interacting factor 1 (Lrif1) from Mus musculus (Mouse).